The following is a 337-amino-acid chain: Probable phospholipase A1 magnifin (337 aa).

An N-terminal signal peptide occupies residues 1–21 (MNLKYLLLFFCLVQVLHYCYS). The propeptide occupies 22–33 (HGDPSLSNELDR). C39 and C123 are oxidised to a cystine. The active-site Nucleophile is S173. D201 (charge relay system) is an active-site residue. 2 disulfide bridges follow: C212-C217 and C255-C264. Residue H266 is the Charge relay system of the active site. 3 disulfides stabilise this stretch: C281–C305, C282–C330, and C298–C303.

This sequence belongs to the AB hydrolase superfamily. Lipase family. In terms of tissue distribution, expressed by the venom gland.

The protein localises to the secreted. It carries out the reaction a 1,2-diacyl-sn-glycero-3-phosphocholine + H2O = a 2-acyl-sn-glycero-3-phosphocholine + a fatty acid + H(+). Catalyzes the hydrolysis of phosphatidylcholine with phospholipase A1 activity. May act as an allergen and induce hemolytic activity. In vivo, induces dose-dependent platelet aggregation (nanomolar concentration) and induces thrombosis. The chain is Probable phospholipase A1 magnifin from Vespa magnifica (Hornet).